A 558-amino-acid polypeptide reads, in one-letter code: Glypican-1 (558 aa).

Positions 1-23 (MELRARGWWLLCAAAALVACTRG) are cleaved as a signal peptide. Intrachain disulfides connect Cys-32/Cys-68, Cys-62/Cys-256, Cys-69/Cys-259, Cys-191/Cys-343, Cys-246/Cys-279, Cys-268/Cys-415, and Cys-272/Cys-401. Asn-79 and Asn-116 each carry an N-linked (GlcNAc...) asparagine glycan. A disordered region spans residues 478–531 (FQDASDDGSGSGSGGGCPDDACGRRVSKKSSSSRTPLIHALPGLSEQEGQKTSA). O-linked (Xyl...) (heparan sulfate) serine glycosylation is found at Ser-486, Ser-488, and Ser-490. Ser-530 carries GPI-anchor amidated serine lipidation. Residues 531–558 (AATRPEPHYFFLLFLFTLVLAAARPRWR) constitute a propeptide, removed in mature form.

The protein belongs to the glypican family. Post-translationally, S-nitrosylated in a Cu(2+)-dependent manner. Nitric acid (NO) is released from the nitrosylated cysteines by ascorbate or by some other reducing agent, in a Cu(2+) or Zn(2+) dependent manner. This free nitric oxide is then capable of cleaving the heparan sulfate side chains. N- and O-glycosylated. N-glycosylation is mainly of the complex type containing sialic acid. O-glycosylated with heparan sulfate. The heparan sulfate chains can be cleaved either by the action of heparanase or, degraded by a deaminative process that uses nitric oxide (NO) released from the S-nitrosylated cysteines. This process is triggered by ascorbate, or by some other reducing agent, in a Cu(2+)- or Zn(2+) dependent manner. Cu(2+) ions are provided by ceruloproteins such as APP, PRNP or CP which associate with GCP1 in intracellular compartments or lipid rafts. In terms of processing, this cell-associated glypican is further processed to give rise to a medium-released species. In terms of tissue distribution, nervous system.

It localises to the cell membrane. The protein resides in the endosome. Its subcellular location is the secreted. It is found in the extracellular space. Its function is as follows. Cell surface proteoglycan that bears heparan sulfate. May act as a catalyst in increasing the rate of conversion of prion protein PRPN(C) to PRNP(Sc) via associating (via the heparan sulfate side chains) with both forms of PRPN, targeting them to lipid rafts and facilitating their interaction. Required for proper skeletal muscle differentiation by sequestering FGF2 in lipid rafts preventing its binding to receptors (FGFRs) and inhibiting the FGF-mediated signaling. Binds Cu(2+) or Zn(2+) ions. Binds, via the heparan sulfate side chains, alpha-4 (V) collagen and participates in Schwann cell myelination. This Rattus norvegicus (Rat) protein is Glypican-1 (Gpc1).